The chain runs to 637 residues: Phospholipase B (637 aa).

Positions Met1 to Ala19 are cleaved as a signal peptide. A PLA2c domain is found at Asp46–Asn572. Asn50, Asn56, Asn122, Asn231, Asn246, Asn272, Asn314, Asn343, Asn387, Asn433, Asn481, Asn501, Asn528, Asn553, Asn572, Asn594, and Asn606 each carry an N-linked (GlcNAc...) asparagine glycan.

Belongs to the lysophospholipase family. In terms of processing, N-glycosylated.

Its subcellular location is the secreted. The protein localises to the cell membrane. It carries out the reaction a 1-acyl-sn-glycero-3-phosphocholine + H2O = sn-glycerol 3-phosphocholine + a fatty acid + H(+). With respect to regulation, inhibited by Fe(3+) ion. Its function is as follows. Exhibits phospholipase B (PLB), lysophospholipase (LPL) and lysophospholipase/transacylase (LPTA) activities. This Cryptococcus neoformans var. grubii serotype A (strain H99 / ATCC 208821 / CBS 10515 / FGSC 9487) (Filobasidiella neoformans var. grubii) protein is Phospholipase B (PLB1).